Here is a 305-residue protein sequence, read N- to C-terminus: UDP-N-acetylenolpyruvoylglucosamine reductase 2 (305 aa).

Positions 33–197 (VGGKADVFVA…LEARFELEEG (165 aa)) constitute an FAD-binding PCMH-type domain. Arg176 is an active-site residue. Catalysis depends on Ser226, which acts as the Proton donor. The active site involves Glu296.

Belongs to the MurB family. FAD serves as cofactor.

It localises to the cytoplasm. The enzyme catalyses UDP-N-acetyl-alpha-D-muramate + NADP(+) = UDP-N-acetyl-3-O-(1-carboxyvinyl)-alpha-D-glucosamine + NADPH + H(+). The protein operates within cell wall biogenesis; peptidoglycan biosynthesis. Cell wall formation. This chain is UDP-N-acetylenolpyruvoylglucosamine reductase 2 (murB2), found in Bacillus cereus (strain ATCC 14579 / DSM 31 / CCUG 7414 / JCM 2152 / NBRC 15305 / NCIMB 9373 / NCTC 2599 / NRRL B-3711).